The following is a 721-amino-acid chain: Zinc-transporting ATPase (721 aa).

Residues 1–107 (MTQSSPLKTQ…HSHGAGEFNL (107 aa)) are Cytoplasmic-facing. The HMA domain occupies 8–74 (KTQQMQVGGM…RIAALGYTLA (67 aa)). Zn(2+)-binding residues include cysteine 19 and cysteine 22. The segment at 80–101 (VTLNGHKHPHSHREEGHSHSHG) is disordered. The chain crosses the membrane as a helical span at residues 108–128 (KQELLPVLTAIALFTIAILFE). Residues 129–140 (QPLHNTPGQIAE) lie on the Extracellular side of the membrane. A helical transmembrane segment spans residues 141–160 (FAVIIPAYLLSGWTVLKTAG). The Cytoplasmic portion of the chain corresponds to 161–167 (RNILRGQ). A helical transmembrane segment spans residues 168-187 (IFDENFLMTIATLGALAIHQ). Over 188 to 190 (LPE) the chain is Extracellular. A helical transmembrane segment spans residues 191-210 (AVAVMLFFRVGELFQEYSVG). At 211–344 (RSRRSIKALL…ITQFARYYTP (134 aa)) the chain is on the cytoplasmic side. The chain crosses the membrane as a helical span at residues 345–363 (VIVFLSLAVALLPPLFIPG). The Extracellular segment spans residues 364-369 (ADRADW). Residues 370 to 387 (VYRALVLLVISCPCGLVI) form a helical membrane-spanning segment. At 388-671 (SIPLGYFGGI…AIHVARKTRQ (284 aa)) the chain is on the cytoplasmic side. The active-site 4-aspartylphosphate intermediate is aspartate 425. Residues aspartate 618 and aspartate 622 each contribute to the Mg(2+) site. Residues 672-693 (IVVQNIVLALGIKALFIALGTI) traverse the membrane as a helical segment. The Extracellular portion of the chain corresponds to 694 to 701 (GLATLWEA). A helical transmembrane segment spans residues 702-717 (VFADVGVALLAILNAT). The Cytoplasmic segment spans residues 718–721 (RIAK).

This sequence belongs to the cation transport ATPase (P-type) (TC 3.A.3) family. Type IB subfamily.

It is found in the cell membrane. The catalysed reaction is Zn(2+)(in) + ATP + H2O = Zn(2+)(out) + ADP + phosphate + H(+). This is Zinc-transporting ATPase (ziaA) from Synechocystis sp. (strain ATCC 27184 / PCC 6803 / Kazusa).